We begin with the raw amino-acid sequence, 365 residues long: Palmitoyltransferase ZDHHC20 (365 aa).

Residues 1 to 14 (MAPCTLWRCCQRTV) are Cytoplasmic-facing. A helical transmembrane segment spans residues 15-35 (GWVPVLFITFVVVWSYYAYVV). Topologically, residues 36–53 (ELCVFTLSGNGENGKAVV) are lumenal. The chain crosses the membrane as a helical span at residues 54 to 74 (YLVAFHLFFVMFVWSYWMTIF). The Cytoplasmic portion of the chain corresponds to 75 to 169 (TSPASPSKEF…NNCVGFSNYK (95 aa)). Residues 126 to 176 (RYCERCQLIKPDRAHHCSACDMCILKMDHHCPWVNNCVGFSNYKFFLLFLF) enclose the DHHC domain. Zn(2+) is bound by residues Cys128 and Cys131. Substrate contacts are provided by residues Lys135 and 140–143 (HHCS). Zn(2+) contacts are provided by His141, Cys142, Cys145, Cys148, and His155. Residue Cys156 is the S-palmitoyl cysteine intermediate of the active site. Residue Cys162 coordinates Zn(2+). A helical membrane pass occupies residues 170 to 190 (FFLLFLFYSLLYCLFVATTVL). Topologically, residues 191–207 (QYFIKFWTNELTDTRAK) are lumenal. A helical membrane pass occupies residues 208-231 (FHVLFLFFVSTMFFISVLSLLSYH). Residues 232-365 (CWLVGKNRTT…NNHVTVAIEN (134 aa)) lie on the Cytoplasmic side of the membrane. A disordered region spans residues 301–365 (PEQASVSNQS…NNHVTVAIEN (65 aa)). Over residues 302-321 (EQASVSNQSESARSIGSNQP) the composition is skewed to polar residues. Phosphoserine is present on residues Ser305 and Ser330.

Belongs to the DHHC palmitoyltransferase family. In terms of processing, autopalmitoylated (in vitro).

Its subcellular location is the golgi apparatus membrane. The protein localises to the cell membrane. The protein resides in the cytoplasm. It localises to the perinuclear region. It is found in the endoplasmic reticulum membrane. Its subcellular location is the endoplasmic reticulum-Golgi intermediate compartment membrane. It catalyses the reaction L-cysteinyl-[protein] + hexadecanoyl-CoA = S-hexadecanoyl-L-cysteinyl-[protein] + CoA. The enzyme catalyses L-cysteinyl-[protein] + tetradecanoyl-CoA = S-tetradecanoyl-L-cysteinyl-[protein] + CoA. The catalysed reaction is L-cysteinyl-[protein] + octadecanoyl-CoA = S-octadecanoyl-L-cysteinyl-[protein] + CoA. Functionally, palmitoyltransferase that could catalyze the addition of palmitate onto various protein substrates. Catalyzes palmitoylation of Cys residues in the cytoplasmic C-terminus of EGFR, and modulates the duration of EGFR signaling by modulating palmitoylation-dependent EGFR internalization and degradation. Has a preference for acyl-CoA with C16 fatty acid chains. Can also utilize acyl-CoA with C14 and C18 fatty acid chains. May palmitoylate CALHM1 subunit of gustatory voltage-gated ion channels and modulate channel gating and kinetics. This chain is Palmitoyltransferase ZDHHC20, found in Bos taurus (Bovine).